A 315-amino-acid polypeptide reads, in one-letter code: WD repeat domain-containing protein 83 (315 aa).

7 WD repeats span residues 23-62 (CGQG…LLRT), 65-104 (GHGY…VVRK), 107-146 (GHAG…PEPV), 151-188 (EARD…VTSD), 190-228 (VGSP…LLGE), 231-272 (GHKN…LALA), and 275-313 (VGSN…AEGG).

The protein belongs to the WD repeat MORG1 family. As to quaternary structure, interacts with EGLN3/PHD3. Interacts with ERK signaling proteins MAP2K1/MEK1, MAP2K2/MEK2, LAMTOR3, ARAF/Raf-1, MAPK1/ERK2 and MAPK3/ERK1. Identified in the spliceosome C complex. Interacts with PARD6B and CRB3. Interacts strongly with GTP-bound RRAGA but not with inactive GDP-bound. Interacts with p62/SQSTM1. In terms of tissue distribution, highly expressed in testis and brain. Expressed at intermediate level in heart, liver and kidney. Weakly expressed in spleen and lung and absent in muscle.

It is found in the cytoplasm. The protein resides in the lysosome. The protein localises to the nucleus. Its function is as follows. Molecular scaffold protein for various multimeric protein complexes. Acts as a module in the assembly of a multicomponent scaffold for the ERK pathway, linking ERK responses to specific agonists. At low concentrations it enhances ERK activation, whereas high concentrations lead to the inhibition of ERK activation. Also involved in response to hypoxia by acting as a negative regulator of HIF1A/HIF-1-alpha via its interaction with EGLN3/PHD3. May promote degradation of HIF1A. May act by recruiting signaling complexes to a specific upstream activator. May also be involved in pre-mRNA splicing. Participates in tight junction development by regulating apico-basal polarity, a key step in tissue development and organization. Mechanistically, regulates the translocation of PAR6-aPKC from the cytoplasm to the apical surface by acting as an adapter between PARD6B AND CRB3. Also acts as a negative regulator of mTORC1 under nutrient-rich conditions by binding to the active Rag GTPases to inhibit mTORC1 localization to the lysosome and phosphorylation of downstream targets. This facilitates constitutive basal autophagy during nutrient availability. This chain is WD repeat domain-containing protein 83 (Wdr83), found in Rattus norvegicus (Rat).